The chain runs to 538 residues: Chaperonin GroEL (538 aa).

ATP is bound by residues 29–32 (TLGP), 86–90 (DGTTT), glycine 413, 477–479 (NAA), and aspartate 493.

Belongs to the chaperonin (HSP60) family. As to quaternary structure, forms a cylinder of 14 subunits composed of two heptameric rings stacked back-to-back. Interacts with the co-chaperonin GroES.

The protein localises to the cytoplasm. It carries out the reaction ATP + H2O + a folded polypeptide = ADP + phosphate + an unfolded polypeptide.. In terms of biological role, together with its co-chaperonin GroES, plays an essential role in assisting protein folding. The GroEL-GroES system forms a nano-cage that allows encapsulation of the non-native substrate proteins and provides a physical environment optimized to promote and accelerate protein folding. The sequence is that of Chaperonin GroEL from Scardovia inopinata (Bifidobacterium inopinatum).